Consider the following 473-residue polypeptide: Vasculin (473 aa).

Disordered regions lie at residues 1–25 (MAQH…SSLN), 44–170 (RRRH…SRTP), and 186–341 (SGFP…HQER). Ser49 carries the phosphoserine modification. Arg87 is subject to Omega-N-methylarginine. The segment covering 94–117 (NSRSRSSIFHSGKSQGLHENSIPD) has biased composition (polar residues). Residues 119-133 (ETGRKEDKRERRQFE) are compositionally biased toward basic and acidic residues. Polar residues-rich tracts occupy residues 193–204 (NLQSQPVKNGTG) and 248–286 (NFNT…QQPR). Residues Ser274, Ser276, Ser322, and Ser381 each carry the phosphoserine modification. Residues 293 to 329 (MRSDKKSEFLKALKRDRVEEEHEDESHAGSEKDDDSF) show a composition bias toward basic and acidic residues. Positions 450–473 (TFKPTIENDDTETSSSDTSDDDDV) are disordered. Acidic residues predominate over residues 456-473 (ENDDTETSSSDTSDDDDV).

This sequence belongs to the vasculin family. In terms of assembly, interacts with GTF2B, GTF2F2, RNA polymerase II and TBP. As to expression, ubiquitously expressed (at protein level).

The protein resides in the nucleus. Its function is as follows. Functions as a GC-rich promoter-specific transactivating transcription factor. The chain is Vasculin (Gpbp1) from Mus musculus (Mouse).